We begin with the raw amino-acid sequence, 1280 residues long: Pullulanase A (1280 aa).

An N-terminal signal peptide occupies residues 1–44; that stretch reads MRKTPSHTEKKMVYSIRSLKNGTGSVLIGASLVLLAMATPTISS. Residues 42–132 are disordered; sequence ISSDESTPTT…VTTETKAEEP (91 aa). A compositionally biased stretch (low complexity) spans 48-61; it reads TPTTNEPNNRNTTT. Polar residues predominate over residues 79-90; the sequence is DISSPGNANASL. Residues 115–126 show a composition bias toward low complexity; sequence EPTTSTSPVTTE. Residues 156–158, Trp168, Asp214, 263–265, Trp276, Lys318, and Asn323 contribute to the substrate site; these read WTW and WYW. Ca(2+) is bound by residues Ser661 and Tyr663. Substrate contacts are provided by residues 667 to 668 and Phe743; that span reads YD. The active-site Nucleophile is Asp778. Glu807 functions as the Proton donor in the catalytic mechanism. Position 809 (Trp809) interacts with substrate. Ca(2+) is bound by residues Met828, Thr831, and Asp832. Substrate contacts are provided by Asp839, Arg842, and Tyr849. 2 residues coordinate Ca(2+): Asp882 and Asp886. Residues Asn896, Lys969, and 989 to 991 each bind substrate; that span reads DSY. Asp992 contributes to the Ca(2+) binding site. The interval 1140-1248 is disordered; sequence VSQNGTSHES…TPDKQAELPN (109 aa). Residues 1149 to 1196 show a composition bias toward basic and acidic residues; it reads STAEEKPDSTPSKPEHQNEASHPAHQDPAPEARPDSTKPDAKVADAEN. The span at 1205 to 1218 shows a compositional bias: low complexity; that stretch reads SQAEQPAQEAQASS. Positions 1246 to 1250 match the LPXTG sorting signal motif; that stretch reads LPNTG. Thr1249 is subject to Pentaglycyl murein peptidoglycan amidated threonine. A propeptide spans 1250–1280 (removed by sortase); sequence GIKNENKLLFAGISLLALLGLGFLLKNKKEN.

This sequence belongs to the glycosyl hydrolase 13 family.

The protein resides in the secreted. Its subcellular location is the cell wall. The protein localises to the cell surface. The catalysed reaction is Hydrolysis of (1-&gt;6)-alpha-D-glucosidic linkages in pullulan, amylopectin and glycogen, and in the alpha- and beta-limit dextrins of amylopectin and glycogen.. Inhibited by 4-O-alpha-D-glucopyranosylmoranoline (G1M). Virulence factor. Involved in the degradation of glycogen of the mammalian host cells. Hydrolyzes the alpha-1,6-branchpoints of glycogen. Hydrolyzes pullulan. Does not hydrolyze dextran. Binds to mouse lung alveolar type II cells that are rich in glycogen stores. Is an alpha-glucan-specific carbohydrate-binding protein, which binds to amylose (pure alpha-(1,4)-linked glucose), amylopectin (alpha-(1,4)-linked glucose with alpha-(1,6) branch points), pullulan (linear polymer of mixed alpha-(1,4)- and alpha-(1,6)-linked glucose) and glycogen (similar to amylopectin with more frequent alpha-(1,6) branch points) in vitro. Does not bind to dextran (a linear polymer of alpha-(1,6)-linked glucose). This chain is Pullulanase A, found in Streptococcus pneumoniae serotype 4 (strain ATCC BAA-334 / TIGR4).